The chain runs to 233 residues: Large ribosomal subunit protein uL2 (233 aa).

A disordered region spans residues 194–233 (HPHGGGNHQHVGRPSTVGRGTPPGRKVGRLSPKRRKKYGR). Positions 219–233 (KVGRLSPKRRKKYGR) are enriched in basic residues.

Belongs to the universal ribosomal protein uL2 family. In terms of assembly, part of the 50S ribosomal subunit. Forms a bridge to the 30S subunit in the 70S ribosome.

Its function is as follows. One of the primary rRNA binding proteins. Required for association of the 30S and 50S subunits to form the 70S ribosome, for tRNA binding and peptide bond formation. It has been suggested to have peptidyltransferase activity; this is somewhat controversial. Makes several contacts with the 16S rRNA in the 70S ribosome. The chain is Large ribosomal subunit protein uL2 from Picrophilus torridus (strain ATCC 700027 / DSM 9790 / JCM 10055 / NBRC 100828 / KAW 2/3).